The chain runs to 114 residues: Biofilm growth-associated repressor (114 aa).

An HTH arsR-type domain is found at 17–111 (DMEKRANEVA…ALYTIFCTQE (95 aa)). The H-T-H motif DNA-binding region spans 51-74 (VGELEQQIGIGQPTLSQQLGVLRE).

Functionally, represses an operon that probably comprises itself, PD_1892, PD_1893, PD_1894 and blh. Binds to a palindromic AT-rich sequence spanning the -10 region of the blh promoter and blocks transcription of the operon. This Xylella fastidiosa (strain Temecula1 / ATCC 700964) protein is Biofilm growth-associated repressor (bigR).